We begin with the raw amino-acid sequence, 356 residues long: Peptide-N(4)-(N-acetyl-beta-glucosaminyl)asparagine amidase (356 aa).

Residues C129, C132, C163, and C166 each contribute to the Zn(2+) site. C189 (nucleophile) is an active-site residue. Catalysis depends on residues H216 and D233. Position 236 (E236) interacts with substrate. Residues 300–356 are disordered; sequence IRQNLSPSEKEELKREDEAEERELASYNADEPQEAQMPRQSGSVEWTKARGEGGSDD. Basic and acidic residues-rich tracts occupy residues 307-316 and 346-356; these read SEKEELKRED and TKARGEGGSDD.

This sequence belongs to the transglutaminase-like superfamily. PNGase family. Zn(2+) serves as cofactor.

The protein localises to the cytoplasm. The catalysed reaction is Hydrolysis of an N(4)-(acetyl-beta-D-glucosaminyl)asparagine residue in which the glucosamine residue may be further glycosylated, to yield a (substituted) N-acetyl-beta-D-glucosaminylamine and a peptide containing an aspartate residue.. Functionally, specifically deglycosylates the denatured form of N-linked glycoproteins in the cytoplasm and assists their proteasome-mediated degradation. Cleaves the beta-aspartyl-glucosamine (GlcNAc) of the glycan and the amide side chain of Asn, converting Asn to Asp. Prefers proteins containing high-mannose over those bearing complex type oligosaccharides. Can recognize misfolded proteins in the endoplasmic reticulum that are exported to the cytosol to be destroyed and deglycosylate them, while it has no activity toward native proteins. Deglycosylation is a prerequisite for subsequent proteasome-mediated degradation of some, but not all, misfolded glycoproteins. In Yarrowia lipolytica (strain CLIB 122 / E 150) (Yeast), this protein is Peptide-N(4)-(N-acetyl-beta-glucosaminyl)asparagine amidase (PNG1).